Consider the following 96-residue polypeptide: RxLR effector protein PITG_11507 (96 aa).

The first 19 residues, 1–19, serve as a signal peptide directing secretion; the sequence is MRLSFIIVAVSLLAGGSGA. The interval 27–59 is disordered; that stretch reads SDVLTSRGTNEGARTGKRSLRYDSNVERTGEED. The RxLR-dEER signature appears at 44-59; the sequence is RSLRYDSNVERTGEED. Residues 46 to 55 show a composition bias toward basic and acidic residues; the sequence is LRYDSNVERT.

It belongs to the RxLR effector family.

The protein resides in the secreted. Its subcellular location is the host nucleus. The protein localises to the host cytoplasm. Functionally, effector that enhances P.infestans colonization of Nicotiana benthamiana leaves. This chain is RxLR effector protein PITG_11507, found in Phytophthora infestans (strain T30-4) (Potato late blight agent).